The chain runs to 302 residues: ICOS ligand (302 aa).

The N-terminal stretch at 1-18 is a signal peptide; sequence MRLGSPGLLFLLFSSLRA. Residues 19–129 form the Ig-like V-type domain; it reads DTQEKEVRAM…LGFQEVLSVE (111 aa). The Extracellular segment spans residues 19–256; it reads DTQEKEVRAM…VSTGEKNAAT (238 aa). A disulfide bridge connects residues cysteine 37 and cysteine 113. Asparagine 70, asparagine 137, asparagine 173, asparagine 186, and asparagine 225 each carry an N-linked (GlcNAc...) asparagine glycan. In terms of domain architecture, Ig-like C2-type spans 141 to 227; that stretch reads PVVSAPHSPS…ENVLLQQNLT (87 aa). Cysteine 158 and cysteine 216 are disulfide-bonded. Residues 257-277 form a helical membrane-spanning segment; it reads WSILAVLCLLVVVAVAIGWVC. Residues 278–302 are Cytoplasmic-facing; the sequence is RDRCLQHSYAGAWAVSPETELTGHV.

Belongs to the immunoglobulin superfamily. BTN/MOG family. As to quaternary structure, interacts with CTLA4 (in vitro). Expressed on peripheral blood B-cells and monocytes, as well as on monocyte-derived dendritic cells (at protein level). As to expression, widely expressed (brain, heart, kidney, liver, lung, pancreas, placenta, skeletal muscle, bone marrow, colon, ovary, prostate, testis, lymph nodes, leukocytes, spleen, thymus and tonsil). In terms of tissue distribution, detected only in lymph nodes, leukocytes and spleen. Expressed on activated monocytes and dendritic cells.

The protein resides in the cell membrane. Its function is as follows. Ligand for the T-cell-specific cell surface receptor ICOS. Acts as a costimulatory signal for T-cell proliferation and cytokine secretion. Also induces B-cell proliferation and differentiation into plasma cells. Could play an important role in mediating local tissue responses to inflammatory conditions, as well as in modulating the secondary immune response by co-stimulating memory T-cell function. In endothelial cells, required for proper neutrophil transmigration in response to chemoattractants, such as CXCL8/IL8 or N-formyl-methionyl peptides (fMLP). The chain is ICOS ligand (ICOSLG) from Homo sapiens (Human).